A 176-amino-acid polypeptide reads, in one-letter code: Membrane-anchored junction protein (176 aa).

Topologically, residues 1–151 (MSLKPFTYPF…QHNSPPPKER (151 aa)) are nuclear. The disordered stretch occupies residues 59–150 (AVMRKRKHMD…LQHNSPPPKE (92 aa)). Residues 95–107 (PPVETRRNRERKT) show a composition bias toward basic and acidic residues. Positions 108 to 120 (QQGLQETLASDIT) are enriched in polar residues. A helical membrane pass occupies residues 152–170 (AATGFFGFLSSLFPFRYFF). Over 171–176 (RKSSHS) the chain is Perinuclear space.

The protein belongs to the MAJIN family. In terms of assembly, component of the MAJIN-TERB1-TERB2 complex, composed of MAJIN, TERB1 and TERB2.

It is found in the nucleus inner membrane. It localises to the chromosome. The protein resides in the telomere. In terms of biological role, meiosis-specific telomere-associated protein involved in meiotic telomere attachment to the nucleus inner membrane, a crucial step for homologous pairing and synapsis. Component of the MAJIN-TERB1-TERB2 complex, which promotes telomere cap exchange by mediating attachment of telomeric DNA to the inner nuclear membrane and replacement of the protective cap of telomeric chromosomes: in early meiosis, the MAJIN-TERB1-TERB2 complex associates with telomeric DNA and the shelterin/telosome complex. During prophase, the complex matures and promotes release of the shelterin/telosome complex from telomeric DNA. In the complex, MAJIN acts as the anchoring subunit to the nucleus inner membrane. MAJIN shows DNA-binding activity, possibly for the stabilization of telomere attachment on the nucleus inner membrane. The chain is Membrane-anchored junction protein from Homo sapiens (Human).